Here is a 469-residue protein sequence, read N- to C-terminus: Glutamate--tRNA ligase (469 aa).

The 'HIGH' region signature appears at 11 to 21 (PSPTGFIHLGN). The span at 116–131 (ASGEKPRYDGTWRPEP) shows a compositional bias: basic and acidic residues. Residues 116–139 (ASGEKPRYDGTWRPEPGKVLPTPP) are disordered. The 'KMSKS' region motif lies at 243 to 247 (KMSKR). Residue Lys-246 participates in ATP binding.

This sequence belongs to the class-I aminoacyl-tRNA synthetase family. Glutamate--tRNA ligase type 1 subfamily. Monomer.

The protein localises to the cytoplasm. It catalyses the reaction tRNA(Glu) + L-glutamate + ATP = L-glutamyl-tRNA(Glu) + AMP + diphosphate. In terms of biological role, catalyzes the attachment of glutamate to tRNA(Glu) in a two-step reaction: glutamate is first activated by ATP to form Glu-AMP and then transferred to the acceptor end of tRNA(Glu). The protein is Glutamate--tRNA ligase of Paraburkholderia phymatum (strain DSM 17167 / CIP 108236 / LMG 21445 / STM815) (Burkholderia phymatum).